The primary structure comprises 79 residues: Conotoxin Vi6.1 (79 aa).

The signal sequence occupies residues Met-1–Ala-22. A propeptide spanning residues Asp-23–Arg-47 is cleaved from the precursor. 3 disulfides stabilise this stretch: Cys-49–Cys-62, Cys-56–Cys-67, and Cys-61–Cys-77. 2 positions are modified to 4-hydroxyproline: Pro-60 and Pro-63.

As to expression, expressed by the venom duct.

It localises to the secreted. Ion channel inhibitor that inhibits the increase in intracellular calcium upon depolarization in DRG neurons. In vivo, both intraperitoneal and intracranial injections into mice induce hyperactivity. The sequence is that of Conotoxin Vi6.1 from Conus virgo (Virgin cone).